Reading from the N-terminus, the 141-residue chain is Nucleoside diphosphate kinase (141 aa).

ATP contacts are provided by lysine 11, phenylalanine 59, arginine 87, threonine 93, arginine 104, and asparagine 114. Histidine 117 functions as the Pros-phosphohistidine intermediate in the catalytic mechanism.

The protein belongs to the NDK family. In terms of assembly, homotetramer. Requires Mg(2+) as cofactor.

The protein resides in the cytoplasm. It carries out the reaction a 2'-deoxyribonucleoside 5'-diphosphate + ATP = a 2'-deoxyribonucleoside 5'-triphosphate + ADP. The enzyme catalyses a ribonucleoside 5'-diphosphate + ATP = a ribonucleoside 5'-triphosphate + ADP. Its function is as follows. Major role in the synthesis of nucleoside triphosphates other than ATP. The ATP gamma phosphate is transferred to the NDP beta phosphate via a ping-pong mechanism, using a phosphorylated active-site intermediate. The protein is Nucleoside diphosphate kinase of Haemophilus influenzae (strain ATCC 51907 / DSM 11121 / KW20 / Rd).